A 438-amino-acid chain; its full sequence is UPF0229 protein NGR_c12350 (438 aa).

The span at 1-16 (MPNFIDRRLNPKDKSL) shows a compositional bias: basic and acidic residues. Disordered regions lie at residues 1 to 20 (MPNF…GNRQ) and 83 to 107 (FAAG…GTGQ). Residues 94 to 105 (SGGGATGAGAGT) are compositionally biased toward gly residues.

It belongs to the UPF0229 family.

This is UPF0229 protein NGR_c12350 from Sinorhizobium fredii (strain NBRC 101917 / NGR234).